Here is a 614-residue protein sequence, read N- to C-terminus: Zinc metalloproteinase-disintegrin-like VLAIP-B (614 aa).

Residues 1–20 (MMQVLLVTICLAVFPYQGSS) form the signal peptide. The propeptide occupies 21 to 193 (IILESGNVND…KASQLNLTPE (173 aa)). At glutamine 194 the chain carries Pyrrolidone carboxylic acid. A Peptidase M12B domain is found at 202-398 (KYVELVIVAD…KMPQCILNKP (197 aa)). Residue glutamate 205 coordinates Ca(2+). Asparagine 262 carries an N-linked (GlcNAc...) asparagine glycan. Ca(2+) is bound at residue aspartate 289. 3 disulfide bridges follow: cysteine 313/cysteine 393, cysteine 353/cysteine 377, and cysteine 355/cysteine 360. Residue histidine 338 coordinates Zn(2+). Residue glutamate 339 is part of the active site. Residues histidine 342 and histidine 348 each coordinate Zn(2+). Ca(2+)-binding residues include cysteine 393, asparagine 396, valine 408, asparagine 411, phenylalanine 413, glutamate 415, glutamate 418, and aspartate 421. Residues 406–492 (PAVCGNYFVE…ECPTDQFQRN (87 aa)) form the Disintegrin domain. Cystine bridges form between cysteine 409–cysteine 438, cysteine 420–cysteine 433, cysteine 422–cysteine 428, cysteine 432–cysteine 455, cysteine 446–cysteine 452, cysteine 451–cysteine 477, cysteine 464–cysteine 484, cysteine 471–cysteine 503, cysteine 496–cysteine 508, cysteine 515–cysteine 565, cysteine 530–cysteine 576, cysteine 543–cysteine 553, cysteine 560–cysteine 602, and cysteine 596–cysteine 607. Positions 470 to 472 (ECD) match the D/ECD-tripeptide motif. Residues asparagine 505, asparagine 547, and asparagine 568 are each glycosylated (N-linked (GlcNAc...) asparagine).

It belongs to the venom metalloproteinase (M12B) family. P-III subfamily. P-IIIc sub-subfamily. Heterodimer; disulfide-linked. The cofactor is Zn(2+). In terms of processing, the N-terminus is blocked. As to expression, expressed by the venom gland.

The protein resides in the secreted. Its activity is regulated as follows. Inhibited by EDTA or 1,10-phenanthroline. Not inhibited by PMSF. Its function is as follows. This metalloproteinase hydrolyzes azocasein, and insulin B-chain (at the '38-Ala-|-Leu-39' bond). Also hydrolyzes the Aalpha-chain (FGA) and more slowly the Bbeta-chain of fibrinogen (FGB), without affecting the gamma-chain. Cleaves alpha-chain of fibrinogen at '432-Lys-|-Leu-433' and '535-Pro-|-Met-536' bonds. Does not cleave fibrin. Inhibits endothelial cell adhesion to extracellular matrix proteins such as fibrinogen, fibronectin, vitronectin, collagen I, and collagen IV. Induces apoptosis in vascular endothelial cells. This chain is Zinc metalloproteinase-disintegrin-like VLAIP-B, found in Macrovipera lebetinus (Levantine viper).